The following is a 255-amino-acid chain: Epoxyqueuosine reductase QueH (255 aa).

Cysteine 44, cysteine 45, cysteine 128, and cysteine 131 together coordinate [4Fe-4S] cluster. An intrachain disulfide couples cysteine 210 to cysteine 212.

This sequence belongs to the QueH family.

The catalysed reaction is epoxyqueuosine(34) in tRNA + AH2 = queuosine(34) in tRNA + A + H2O. The protein operates within tRNA modification; tRNA-queuosine biosynthesis. Its function is as follows. Catalyzes the conversion of epoxyqueuosine (oQ) to queuosine (Q), which is a hypermodified base found in the wobble positions of tRNA(Asp), tRNA(Asn), tRNA(His) and tRNA(Tyr). This is Epoxyqueuosine reductase QueH from Streptococcus pyogenes serotype M1.